The chain runs to 382 residues: 8-amino-7-oxononanoate synthase (382 aa).

Substrate is bound at residue Arg-26. 104-105 is a pyridoxal 5'-phosphate binding site; it reads GY. Substrate is bound at residue His-129. Residues Ser-175, 200-203, and 232-235 contribute to the pyridoxal 5'-phosphate site; these read DEAH and TLSK. Residue Lys-235 is modified to N6-(pyridoxal phosphate)lysine. Thr-345 is a substrate binding site.

This sequence belongs to the class-II pyridoxal-phosphate-dependent aminotransferase family. BioF subfamily. In terms of assembly, homodimer. Requires pyridoxal 5'-phosphate as cofactor.

The catalysed reaction is 6-carboxyhexanoyl-[ACP] + L-alanine + H(+) = (8S)-8-amino-7-oxononanoate + holo-[ACP] + CO2. Its pathway is cofactor biosynthesis; biotin biosynthesis. Functionally, catalyzes the decarboxylative condensation of pimeloyl-[acyl-carrier protein] and L-alanine to produce 8-amino-7-oxononanoate (AON), [acyl-carrier protein], and carbon dioxide. The sequence is that of 8-amino-7-oxononanoate synthase from Mycobacterium sp. (strain KMS).